The primary structure comprises 324 residues: Stomatin-like protein stl-1 (324 aa).

It belongs to the band 7/mec-2 family. Widely expressed in most tissues, including body wall muscles, intestinal epithelia, and pharynx and head neurons.

The protein localises to the mitochondrion. In terms of biological role, mitochondrial protein that probably regulates the biogenesis and the activity of mitochondria. In neurons, involved in mitochondrial fusion and recovery of normal locomotory behavior during reoxygenation; probably acts independently of egl-9 and the canonical hypoxia response pathway. This Caenorhabditis elegans protein is Stomatin-like protein stl-1.